Consider the following 532-residue polypeptide: T-complex protein 1 subunit beta (532 aa).

The protein belongs to the TCP-1 chaperonin family. Heterooligomeric complex of about 850 to 900 kDa that forms two stacked rings, 12 to 16 nm in diameter.

Its subcellular location is the cytoplasm. Its function is as follows. Molecular chaperone; assists the folding of proteins upon ATP hydrolysis. Known to play a role, in vitro, in the folding of actin and tubulin. In Dictyostelium discoideum (Social amoeba), this protein is T-complex protein 1 subunit beta (cct2).